We begin with the raw amino-acid sequence, 252 residues long: MILHAQAKHGKPGLPWLVFLHGFSGDCHEWQEVGEVFADYSRLYVDLPGHGGSAAISVDGFDDVTGLLCKTLVSYNILDFWLVGYSLGGRVAMMAACQGLAGLCGVVVEGGHPGLQNAEQRTQRQRSDRQWAQRFRTEPLTAVFADWYQQPVFASLNDEQRRELVALRSNNNGATLAAMLEATSLAVQPDLRANLSARTFAFYYLCGERDSKFRALAAELAAECHVIPRAGHNAHRENPAGVIASLAQILRF.

It belongs to the AB hydrolase superfamily. MenH family. As to quaternary structure, monomer.

The enzyme catalyses 5-enolpyruvoyl-6-hydroxy-2-succinyl-cyclohex-3-ene-1-carboxylate = (1R,6R)-6-hydroxy-2-succinyl-cyclohexa-2,4-diene-1-carboxylate + pyruvate. The protein operates within quinol/quinone metabolism; 1,4-dihydroxy-2-naphthoate biosynthesis; 1,4-dihydroxy-2-naphthoate from chorismate: step 3/7. It functions in the pathway quinol/quinone metabolism; menaquinone biosynthesis. Its function is as follows. Catalyzes a proton abstraction reaction that results in 2,5-elimination of pyruvate from 2-succinyl-5-enolpyruvyl-6-hydroxy-3-cyclohexene-1-carboxylate (SEPHCHC) and the formation of 2-succinyl-6-hydroxy-2,4-cyclohexadiene-1-carboxylate (SHCHC). This Escherichia coli (strain SMS-3-5 / SECEC) protein is 2-succinyl-6-hydroxy-2,4-cyclohexadiene-1-carboxylate synthase.